A 473-amino-acid polypeptide reads, in one-letter code: Ribosomal RNA small subunit methyltransferase F (473 aa).

S-adenosyl-L-methionine-binding positions include alanine 124 to lysine 130, glutamate 148, aspartate 175, and aspartate 193. Catalysis depends on cysteine 246, which acts as the Nucleophile.

It belongs to the class I-like SAM-binding methyltransferase superfamily. RsmB/NOP family.

The protein localises to the cytoplasm. It catalyses the reaction cytidine(1407) in 16S rRNA + S-adenosyl-L-methionine = 5-methylcytidine(1407) in 16S rRNA + S-adenosyl-L-homocysteine + H(+). Functionally, specifically methylates the cytosine at position 1407 (m5C1407) of 16S rRNA. The chain is Ribosomal RNA small subunit methyltransferase F from Aliivibrio fischeri (strain MJ11) (Vibrio fischeri).